A 46-amino-acid polypeptide reads, in one-letter code: Elongation factor Tu (46 aa).

A compositionally biased stretch (basic and acidic residues) spans 1 to 10 (MAKGKFERSK). The interval 1–20 (MAKGKFERSKPHVNVGTIGH) is disordered. 19–26 (GHVDHGKT) is a GTP binding site.

The protein belongs to the GTP-binding elongation factor family. EF-Tu/EF-1A subfamily. As to quaternary structure, monomer.

Its subcellular location is the cytoplasm. In terms of biological role, this protein promotes the GTP-dependent binding of aminoacyl-tRNA to the A-site of ribosomes during protein biosynthesis. This chain is Elongation factor Tu (tufA), found in Eikenella corrodens.